The following is a 294-amino-acid chain: Nucleotide-binding protein CLD_1131 (294 aa).

Gly8 to Thr15 contacts ATP. Residue Asp59 to Gly62 participates in GTP binding.

This sequence belongs to the RapZ-like family.

In terms of biological role, displays ATPase and GTPase activities. In Clostridium botulinum (strain Okra / Type B1), this protein is Nucleotide-binding protein CLD_1131.